We begin with the raw amino-acid sequence, 150 residues long: Large ribosomal subunit protein bL9 (150 aa).

This sequence belongs to the bacterial ribosomal protein bL9 family.

Its function is as follows. Binds to the 23S rRNA. The polypeptide is Large ribosomal subunit protein bL9 (Idiomarina loihiensis (strain ATCC BAA-735 / DSM 15497 / L2-TR)).